The following is a 202-amino-acid chain: 3-isopropylmalate dehydratase small subunit (202 aa).

Belongs to the LeuD family. LeuD type 1 subfamily. As to quaternary structure, heterodimer of LeuC and LeuD.

It catalyses the reaction (2R,3S)-3-isopropylmalate = (2S)-2-isopropylmalate. It participates in amino-acid biosynthesis; L-leucine biosynthesis; L-leucine from 3-methyl-2-oxobutanoate: step 2/4. Functionally, catalyzes the isomerization between 2-isopropylmalate and 3-isopropylmalate, via the formation of 2-isopropylmaleate. The chain is 3-isopropylmalate dehydratase small subunit from Rhizobium etli (strain CIAT 652).